A 501-amino-acid chain; its full sequence is MTDDKTTPARASAKLPRGFGDRGPAEIAATEKMLAAIRASYELYGFEAVETPFIEFTDALGKFLPDLDRPNEGVFSFKDDDESWLSLRYDLTAPLARFVAENFDKLPKPYRSYRAGYVFRNEKPGPGRFRQFMQFDADTVGAPSVAADAEMCMMAADTLERLGVKRGDYVIKVNNRKVLDGVLEAIGLGGEENAGRRMTVLRAIDKLDKFGPEGVALLLGPGRKDESGDFTKGAGLERTAVERVLNYVAAQGEGTAQMLGVLRASVAGSQRGEEGVAELAEIAALIDAAGFSARIRIDPSVVRGLEYYTGPVFEAELTFEVQGEDGKPVRFGSIGGGGRYDGLVGRFRGENVPATGFSIGVSRLYSALKAVGSPIVSAASQPGPVVVLVLDREHLARYQGFVTALRSADIRAELYLGGSGMNAQLKYADKRGSLCAVIQGSNERDHAEGARVTIRDLALGAELAGASKDRADYLELRAKAQFTVAEQNLVDAVREVMARRS.

This sequence belongs to the class-II aminoacyl-tRNA synthetase family. In terms of assembly, homodimer.

Its subcellular location is the cytoplasm. It catalyses the reaction tRNA(His) + L-histidine + ATP = L-histidyl-tRNA(His) + AMP + diphosphate + H(+). The protein is Histidine--tRNA ligase of Methylocella silvestris (strain DSM 15510 / CIP 108128 / LMG 27833 / NCIMB 13906 / BL2).